A 427-amino-acid chain; its full sequence is MTEAMKITLSTQPADARWGEKATYSINNDGITLHLNGADDLGLIQRAARKIDGLGIKHVQLSGEGWDADRCWAFWQGYKGPKGTRKVEWPDLDDAQRQELDNRLMIIDWVRDTINAPAEELGPSQLAQRAVDLISNVAGDRVTYRITKGEDLREQGYMGLHTVGRGSERSPVLLALDYNPTGDKEAPVYACLVGKGITFDSGGYSIKQTAFMDSMKSDMGGAATVTGALAFAIMRGLNKRVKLFLCCADNLISGNAFKLGDIITYRNGKKVEVMNTDAEGRLVLADGLIDASAQKPEMIIDAATLTGAAKTALGNDYHALFSFDDALAGRLLASASQENEPFWRLPLAEFHRSQLPSNFAELNNTGSAAYPAGASTAAGFLSHFVENYQQGWLHIDCSATYRKAPVEQWSAGATGLGVRTIANLLTA.

Positions 195 and 200 each coordinate Mn(2+). K207 is an active-site residue. Residues D218, D277, and E279 each coordinate Mn(2+). Residue R281 is part of the active site.

Belongs to the peptidase M17 family. In terms of assembly, homohexamer. It depends on Mn(2+) as a cofactor.

The protein localises to the cytoplasm. It carries out the reaction Release of an N-terminal amino acid, Xaa, from a peptide or arylamide. Xaa is preferably Glu or Asp but may be other amino acids, including Leu, Met, His, Cys and Gln.. Its function is as follows. Probably plays an important role in intracellular peptide degradation. In Shigella flexneri, this protein is Peptidase B.